Here is a 99-residue protein sequence, read N- to C-terminus: Large ribosomal subunit protein eL36 (99 aa).

It belongs to the eukaryotic ribosomal protein eL36 family. As to quaternary structure, component of the large ribosomal subunit. Mature ribosomes consist of a small (40S) and a large (60S) subunit. The 40S subunit contains about 32 different proteins and 1 molecule of RNA (18S). The 60S subunit contains 45 different proteins and 3 molecules of RNA (25S, 5.8S and 5S).

The protein localises to the cytoplasm. Component of the ribosome, a large ribonucleoprotein complex responsible for the synthesis of proteins in the cell. The small ribosomal subunit (SSU) binds messenger RNAs (mRNAs) and translates the encoded message by selecting cognate aminoacyl-transfer RNA (tRNA) molecules. The large subunit (LSU) contains the ribosomal catalytic site termed the peptidyl transferase center (PTC), which catalyzes the formation of peptide bonds, thereby polymerizing the amino acids delivered by tRNAs into a polypeptide chain. The nascent polypeptides leave the ribosome through a tunnel in the LSU and interact with protein factors that function in enzymatic processing, targeting, and the membrane insertion of nascent chains at the exit of the ribosomal tunnel. The chain is Large ribosomal subunit protein eL36 from Candida albicans (strain SC5314 / ATCC MYA-2876) (Yeast).